The chain runs to 598 residues: MATRIKILPEQLTNKIAAGEVVERPASVVKELVENALDAGCSEVMVEIEAGGKRLIRVSDTGCGMTREDALLALERHATSKIANDEDLFSLATLGFRGEALPSVASVSRFTLATREKGSLEGTEIYAEGGRIKEVKACGMAEGTVISVRNLFFNTPARLKFMKSSETEAGHVGDLLTRLAISRPDIRFIYTNDGKTVFRALNADLRERVATLLGRTLSQDLYPLDFCDGQLNVTGLVGKPECSRSAASHVYTYINGRFIRDKVVQHAVLQAYRNFMERGRYPVVVLFISVPAAEVDVNVHPTKHEVRFREQGRVHDAIQEAVESVLRSSPWVKTQPVVQKTQASTSIAAARIAQVRESLTQYRPQKTTQQSFKMSTPAVPASFRETSLPDPVPVADAAPAPEVERGYFSGLSVIGQFNAAYILCQDGNSLVIIDQHAAHERVAFERLKTQHAAMGVESQRLLFPETVEFSFKEGAVIREHQTELDRVGFSLEEFGGSTWLLNAVPHLLSGNDYVKTLRDILEELQSLGRSRSFQDILEDILARIACHSVVRGSHCLSQQEIKALFQQMDTTEFSSNCPHGRPVLHTLTLAEIERMFKR.

The protein belongs to the DNA mismatch repair MutL/HexB family.

This protein is involved in the repair of mismatches in DNA. It is required for dam-dependent methyl-directed DNA mismatch repair. May act as a 'molecular matchmaker', a protein that promotes the formation of a stable complex between two or more DNA-binding proteins in an ATP-dependent manner without itself being part of a final effector complex. The polypeptide is DNA mismatch repair protein MutL (Geotalea daltonii (strain DSM 22248 / JCM 15807 / FRC-32) (Geobacter daltonii)).